The sequence spans 373 residues: S-adenosylmethionine:tRNA ribosyltransferase-isomerase (373 aa).

Belongs to the QueA family. In terms of assembly, monomer.

It is found in the cytoplasm. The enzyme catalyses 7-aminomethyl-7-carbaguanosine(34) in tRNA + S-adenosyl-L-methionine = epoxyqueuosine(34) in tRNA + adenine + L-methionine + 2 H(+). The protein operates within tRNA modification; tRNA-queuosine biosynthesis. Its function is as follows. Transfers and isomerizes the ribose moiety from AdoMet to the 7-aminomethyl group of 7-deazaguanine (preQ1-tRNA) to give epoxyqueuosine (oQ-tRNA). In Prochlorococcus marinus (strain MIT 9515), this protein is S-adenosylmethionine:tRNA ribosyltransferase-isomerase.